Reading from the N-terminus, the 129-residue chain is Trefoil factor 2 (129 aa).

Residues 1–23 (MGRRDAQLLAALLVLGLCALAGS) form the signal peptide. P-type domains lie at 29 to 73 (CQCS…FHPL) and 79 to 122 (DQCV…FFPK). Cystine bridges form between Cys-29–Cys-127, Cys-31–Cys-58, Cys-42–Cys-57, Cys-52–Cys-69, Cys-81–Cys-107, Cys-91–Cys-106, and Cys-101–Cys-118.

Stomach.

The protein resides in the secreted. Functionally, inhibits gastrointestinal motility and gastric acid secretion. Could function as a structural component of gastric mucus, possibly by stabilizing glycoproteins in the mucus gel through interactions with carbohydrate side chains. The protein is Trefoil factor 2 (TFF2) of Homo sapiens (Human).